The chain runs to 412 residues: Isocitrate dehydrogenase [NADP] cytoplasmic (412 aa).

NADP(+)-binding positions include 76–78 (TIT) and arginine 83. Substrate is bound at residue threonine 78. Residues 95–101 (SPNGTIR), arginine 110, and arginine 133 contribute to the substrate site. Aspartate 253 lines the Mn(2+) pocket. Lysine 261 provides a ligand contact to NADP(+). Aspartate 276 serves as a coordination point for Mn(2+). NADP(+) is bound by residues 309 to 314 (GTVTRH) and asparagine 327.

It belongs to the isocitrate and isopropylmalate dehydrogenases family. In terms of assembly, homodimer. The cofactor is Mg(2+). Mn(2+) is required as a cofactor.

The protein localises to the cytoplasm. The enzyme catalyses D-threo-isocitrate + NADP(+) = 2-oxoglutarate + CO2 + NADPH. The sequence is that of Isocitrate dehydrogenase [NADP] cytoplasmic (idhC) from Dictyostelium discoideum (Social amoeba).